A 198-amino-acid chain; its full sequence is Nucleoid occlusion factor SlmA (198 aa).

The HTH tetR-type domain maps to 10-70 (NRREEILQSL…SLIEFIEDSL (61 aa)). Positions 33-52 (TTAKLAASVGVSEAALYRHF) form a DNA-binding region, H-T-H motif. The stretch at 117–145 (EQDRLQGRINQLFERIEAQLRQVMREKKM) forms a coiled coil.

The protein belongs to the nucleoid occlusion factor SlmA family. As to quaternary structure, homodimer. Interacts with FtsZ.

The protein resides in the cytoplasm. The protein localises to the nucleoid. Functionally, required for nucleoid occlusion (NO) phenomenon, which prevents Z-ring formation and cell division over the nucleoid. Acts as a DNA-associated cell division inhibitor that binds simultaneously chromosomal DNA and FtsZ, and disrupts the assembly of FtsZ polymers. SlmA-DNA-binding sequences (SBS) are dispersed on non-Ter regions of the chromosome, preventing FtsZ polymerization at these regions. The sequence is that of Nucleoid occlusion factor SlmA from Klebsiella pneumoniae subsp. pneumoniae (strain ATCC 700721 / MGH 78578).